The following is a 467-amino-acid chain: Probable receptor-like protein kinase At3g17420 (467 aa).

The N-terminal stretch at 1–35 (MTSQLKRTLTKRYGVLELWEIIVIALFAAFIVILV) is a signal peptide. Topologically, residues 36–123 (LSVWLSFRKK…LPPSTPSTTA (88 aa)) are extracellular. Asn-50 carries an N-linked (GlcNAc...) asparagine glycan. Ser-70 is subject to Phosphoserine. Asn-79 carries an N-linked (GlcNAc...) asparagine glycan. The tract at residues 102–126 (GSLEKKPLVGSHLPPSTPSTTAPSP) is disordered. Residues 124–144 (PSPLLGLPEVSHIGWGHWFTL) form a helical membrane-spanning segment. Residues 145–467 (RDLQLATNHF…DNDITTDAKI (323 aa)) lie on the Cytoplasmic side of the membrane. In terms of domain architecture, Protein kinase spans 154-433 (FSKESIIGDG…MLESDEYPVM (280 aa)). Residues 160–168 (IGDGGYGVV) and Lys-182 each bind ATP. Tyr-227 bears the Phosphotyrosine mark. Asp-280 (proton acceptor) is an active-site residue. Residues Ser-284 and Ser-313 each carry the phosphoserine modification. Phosphothreonine occurs at positions 314 and 319. Tyr-327 is modified (phosphotyrosine). Positions 413–467 (DKRPKMSQVARMLESDEYPVMPREERRRRRNQNAETHRESTDTNKDNDITTDAKI) are disordered. The segment covering 447 to 467 (ETHRESTDTNKDNDITTDAKI) has biased composition (basic and acidic residues).

The protein belongs to the protein kinase superfamily. Ser/Thr protein kinase family.

Its subcellular location is the cell membrane. The enzyme catalyses L-seryl-[protein] + ATP = O-phospho-L-seryl-[protein] + ADP + H(+). It catalyses the reaction L-threonyl-[protein] + ATP = O-phospho-L-threonyl-[protein] + ADP + H(+). In Arabidopsis thaliana (Mouse-ear cress), this protein is Probable receptor-like protein kinase At3g17420.